We begin with the raw amino-acid sequence, 49 residues long: Large ribosomal subunit protein bL33 (49 aa).

This sequence belongs to the bacterial ribosomal protein bL33 family.

The protein is Large ribosomal subunit protein bL33 of Desulforamulus reducens (strain ATCC BAA-1160 / DSM 100696 / MI-1) (Desulfotomaculum reducens).